Here is a 360-residue protein sequence, read N- to C-terminus: Phospho-N-acetylmuramoyl-pentapeptide-transferase (360 aa).

Helical transmembrane passes span 25 to 45 (RGILGVLTALSLALWLGPWMI), 73 to 93 (TMGGALILSAIAVSTLLWADL), 97 to 117 (YVWVVLIVTLAFGAIGWVDDY), 134 to 154 (YFWQSVFGLAAAVFLYKTAPT), 168 to 188 (VTIPLGVGFVVLTYFVIVGSS), 199 to 219 (GLAIMPTVMVGGALGIFCYLS), 236 to 256 (SGELIVFCGALIGAGLGFLWF), 263 to 283 (VFMGDVGALALGAALGTIAVI), 288 to 308 (IVLFIMGGIFVVETLSVVIQV), and 338 to 358 (VIVRFWIITVILVLIGLATLK).

The protein belongs to the glycosyltransferase 4 family. MraY subfamily. Requires Mg(2+) as cofactor.

Its subcellular location is the cell inner membrane. It carries out the reaction UDP-N-acetyl-alpha-D-muramoyl-L-alanyl-gamma-D-glutamyl-meso-2,6-diaminopimeloyl-D-alanyl-D-alanine + di-trans,octa-cis-undecaprenyl phosphate = di-trans,octa-cis-undecaprenyl diphospho-N-acetyl-alpha-D-muramoyl-L-alanyl-D-glutamyl-meso-2,6-diaminopimeloyl-D-alanyl-D-alanine + UMP. The protein operates within cell wall biogenesis; peptidoglycan biosynthesis. In terms of biological role, catalyzes the initial step of the lipid cycle reactions in the biosynthesis of the cell wall peptidoglycan: transfers peptidoglycan precursor phospho-MurNAc-pentapeptide from UDP-MurNAc-pentapeptide onto the lipid carrier undecaprenyl phosphate, yielding undecaprenyl-pyrophosphoryl-MurNAc-pentapeptide, known as lipid I. This is Phospho-N-acetylmuramoyl-pentapeptide-transferase from Pseudomonas putida (strain ATCC 700007 / DSM 6899 / JCM 31910 / BCRC 17059 / LMG 24140 / F1).